The chain runs to 420 residues: Phospholipase A1-II 3 (420 aa).

An N-terminal signal peptide occupies residues 1-21; the sequence is MCCFLLVSVLLATTLTDVASA. N-linked (GlcNAc...) asparagine glycosylation occurs at Asn231. Residue Ser240 is the Acyl-ester intermediate of the active site. The Charge relay system role is filled by Ser240. N-linked (GlcNAc...) asparagine glycosylation occurs at Asn294. Catalysis depends on charge relay system residues Asp305 and His343. Positions 367–388 form a coiled coil; the sequence is VVDRDLALVNKEVDALRDEYQV. Residue Asn403 is glycosylated (N-linked (GlcNAc...) asparagine).

It belongs to the AB hydrolase superfamily. Lipase family.

The protein resides in the secreted. Acylhydrolase that catalyzes the hydrolysis of phospholipids at the sn-1 position. This is Phospholipase A1-II 3 from Oryza sativa subsp. japonica (Rice).